The chain runs to 211 residues: Large ribosomal subunit protein bL25 (211 aa).

Disordered regions lie at residues 1-23 and 191-211; these read MAGE…AARQ and LRSA…AEEV. Residues 196–211 show a composition bias toward acidic residues; sequence NEADEEETEEATAEEV.

This sequence belongs to the bacterial ribosomal protein bL25 family. CTC subfamily. As to quaternary structure, part of the 50S ribosomal subunit; part of the 5S rRNA/L5/L18/L25 subcomplex. Contacts the 5S rRNA. Binds to the 5S rRNA independently of L5 and L18.

This is one of the proteins that binds to the 5S RNA in the ribosome where it forms part of the central protuberance. The chain is Large ribosomal subunit protein bL25 from Dinoroseobacter shibae (strain DSM 16493 / NCIMB 14021 / DFL 12).